The sequence spans 328 residues: 4-hydroxythreonine-4-phosphate dehydrogenase (328 aa).

Substrate-binding residues include His135 and Thr136. Positions 165, 210, and 265 each coordinate a divalent metal cation. Substrate is bound by residues Lys273, Asn282, and Arg291.

This sequence belongs to the PdxA family. As to quaternary structure, homodimer. Zn(2+) is required as a cofactor. Mg(2+) serves as cofactor. It depends on Co(2+) as a cofactor.

The protein localises to the cytoplasm. The enzyme catalyses 4-(phosphooxy)-L-threonine + NAD(+) = 3-amino-2-oxopropyl phosphate + CO2 + NADH. It functions in the pathway cofactor biosynthesis; pyridoxine 5'-phosphate biosynthesis; pyridoxine 5'-phosphate from D-erythrose 4-phosphate: step 4/5. In terms of biological role, catalyzes the NAD(P)-dependent oxidation of 4-(phosphooxy)-L-threonine (HTP) into 2-amino-3-oxo-4-(phosphooxy)butyric acid which spontaneously decarboxylates to form 3-amino-2-oxopropyl phosphate (AHAP). This Enterobacter sp. (strain 638) protein is 4-hydroxythreonine-4-phosphate dehydrogenase.